A 281-amino-acid polypeptide reads, in one-letter code: Dexamethasone-induced Ras-related protein 1 (281 aa).

Cys-11 is subject to S-nitrosocysteine. 31–38 (GSSKVGKT) lines the GTP pocket. The short motif at 53 to 61 (YTPTIEDFH) is the Effector region element. GTP-binding positions include 78 to 82 (DTSGN) and 145 to 148 (NKGD). Cys-278 bears the Cysteine methyl ester mark. A lipid anchor (S-farnesyl cysteine) is attached at Cys-278. Positions 279–281 (VIS) are cleaved as a propeptide — removed in mature form.

Belongs to the small GTPase superfamily. RasD family. In terms of assembly, forms a ternary complex with CAPON and NOS1. Component of a complex, at least composed of APBB1, RASD1/DEXRAS1 and APP. Interacts with APBB1/FE65. Post-translationally, S-nitrosylation stimulates guanine-nucleotide exchange activity. In terms of tissue distribution, expressed in a variety of tissues including heart, cardiovascular tissues, brain, placenta, lung, liver, skeletal muscle, kidney, pancreas, gastrointestinal and reproductive tissues.

Its subcellular location is the cell membrane. It localises to the cytoplasm. The protein resides in the perinuclear region. It is found in the nucleus. Functionally, small GTPase. Negatively regulates the transcription regulation activity of the APBB1/FE65-APP complex via its interaction with APBB1/FE65. The chain is Dexamethasone-induced Ras-related protein 1 (RASD1) from Homo sapiens (Human).